We begin with the raw amino-acid sequence, 351 residues long: Probable galacturonosyltransferase-like 4 (351 aa).

The Cytoplasmic segment spans residues Met-1–Tyr-8. Residues Thr-9–Val-29 form a helical; Signal-anchor for type II membrane protein membrane-spanning segment. Over Arg-30–Glu-351 the chain is Lumenal. 2 N-linked (GlcNAc...) asparagine glycosylation sites follow: Asn-96 and Asn-203.

It belongs to the glycosyltransferase 8 family.

The protein resides in the golgi apparatus membrane. The protein operates within glycan metabolism; pectin biosynthesis. Its function is as follows. May be involved in pectin and/or xylans biosynthesis in cell walls. The protein is Probable galacturonosyltransferase-like 4 (GATL4) of Arabidopsis thaliana (Mouse-ear cress).